The sequence spans 288 residues: UTP--glucose-1-phosphate uridylyltransferase (288 aa).

It belongs to the UDPGP type 2 family.

The enzyme catalyses alpha-D-glucose 1-phosphate + UTP + H(+) = UDP-alpha-D-glucose + diphosphate. It functions in the pathway glycolipid metabolism; diglucosyl-diacylglycerol biosynthesis. Its function is as follows. Catalyzes the formation of UDP-glucose from glucose-1-phosphate and UTP. This is an intermediate step in the biosynthesis of diglucosyl-diacylglycerol (Glc2-DAG), i.e. the predominant glycolipid found in the S.aureus membrane, which is also used as a membrane anchor for lipoteichoic acid (LTA). This Staphylococcus aureus (strain MSSA476) protein is UTP--glucose-1-phosphate uridylyltransferase (gtaB).